A 362-amino-acid chain; its full sequence is MMKRNILAVIVPALLVAGTANAAEIYNKDGNKVDLYGKAVGLHYFSKGNGENSYGGNGDMTYARLGFKGETQINSDLTGYGQWEYNFQGNNSEGADAQTGNKTRLAFAGLKYADVGSFDYGRNYGVVYDALGYTDMLPEFGGDTAYSDDFFVGRVGGVATYRNSNFFGLVDGLNFAVQYLGKNERDTARRSNGDGVGGSISYEYEGFGIVGAYGAADRTNLQEESSLGKGKKAEQWATGLKYDANNIYLAANYGETRNATPITNKFTNTSGFANKTQDVLLVAQYQFDFGLRPSIAYTKSKAKDVEGIGDVDLVNYFEVGATYYFNKNMSTYVDYIINQIDSDNKLGVGSDDTVAVGIVYQF.

The first 22 residues, 1-22, serve as a signal peptide directing secretion; sequence MMKRNILAVIVPALLVAGTANA.

This sequence belongs to the Gram-negative porin family. Homotrimer. Forms mixed heterotrimers with OmpC; other mixed heterotrimers are also probable.

Its subcellular location is the cell outer membrane. Functionally, forms pores that allow passive diffusion of small molecules across the outer membrane. In terms of biological role, (Microbial infection) Is the major receptor for colicin E5. (Microbial infection) A mixed OmpC-OmpF heterotrimer is the outer membrane receptor for toxin CdiA-EC536. The protein is Outer membrane porin F (ompF) of Escherichia coli O6:K15:H31 (strain 536 / UPEC).